Here is a 457-residue protein sequence, read N- to C-terminus: Methylenetetrahydrofolate--tRNA-(uracil-5-)-methyltransferase TrmFO (457 aa).

7–12 provides a ligand contact to FAD; the sequence is GAGLAG. Positions 38-58 are disordered; that stretch reads FTSRQDEKTGTHDVRNATQTR. Residues 40 to 52 are compositionally biased toward basic and acidic residues; that stretch reads SRQDEKTGTHDVR.

The protein belongs to the MnmG family. TrmFO subfamily. It depends on FAD as a cofactor.

It localises to the cytoplasm. It carries out the reaction uridine(54) in tRNA + (6R)-5,10-methylene-5,6,7,8-tetrahydrofolate + NADH + H(+) = 5-methyluridine(54) in tRNA + (6S)-5,6,7,8-tetrahydrofolate + NAD(+). The catalysed reaction is uridine(54) in tRNA + (6R)-5,10-methylene-5,6,7,8-tetrahydrofolate + NADPH + H(+) = 5-methyluridine(54) in tRNA + (6S)-5,6,7,8-tetrahydrofolate + NADP(+). Its function is as follows. Catalyzes the folate-dependent formation of 5-methyl-uridine at position 54 (M-5-U54) in all tRNAs. This Hydrogenobaculum sp. (strain Y04AAS1) protein is Methylenetetrahydrofolate--tRNA-(uracil-5-)-methyltransferase TrmFO.